The chain runs to 264 residues: MSKITSSTLLKYKQEGRKFTALTAYDASFAGAFDSEGVDVLLVGDSLGMVLQGHDDTLPVTTAEIAYHTRCVRRGIERALLIADMPFMSYATPEQAMINATELMQAGANMVKVEGGHWLLETVTKLTERGIPVCAHLGLTPQSVHVFGGFKVQGRDAENAQRILDEAKALEAAGAQLLVVECIPAPLATAITQALTIPVIGIGAGASTDGQILVMHDVLGISSGYIPRFSKNYLKQTGEIRSAVRAYIEEVAAGTFPSAEHTFS.

Aspartate 45 and aspartate 84 together coordinate Mg(2+). Residues 45 to 46 (DS), aspartate 84, and lysine 112 each bind 3-methyl-2-oxobutanoate. A Mg(2+)-binding site is contributed by glutamate 114. Glutamate 181 serves as the catalytic Proton acceptor.

This sequence belongs to the PanB family. Homodecamer; pentamer of dimers. Mg(2+) serves as cofactor.

Its subcellular location is the cytoplasm. The enzyme catalyses 3-methyl-2-oxobutanoate + (6R)-5,10-methylene-5,6,7,8-tetrahydrofolate + H2O = 2-dehydropantoate + (6S)-5,6,7,8-tetrahydrofolate. The protein operates within cofactor biosynthesis; (R)-pantothenate biosynthesis; (R)-pantoate from 3-methyl-2-oxobutanoate: step 1/2. Its function is as follows. Catalyzes the reversible reaction in which hydroxymethyl group from 5,10-methylenetetrahydrofolate is transferred onto alpha-ketoisovalerate to form ketopantoate. The polypeptide is 3-methyl-2-oxobutanoate hydroxymethyltransferase (Shewanella putrefaciens (strain CN-32 / ATCC BAA-453)).